A 57-amino-acid chain; its full sequence is DNA-directed RNA polymerase subunit Rpo6 (57 aa).

Belongs to the archaeal Rpo6/eukaryotic RPB6 RNA polymerase subunit family. As to quaternary structure, part of the RNA polymerase complex.

The protein localises to the cytoplasm. It catalyses the reaction RNA(n) + a ribonucleoside 5'-triphosphate = RNA(n+1) + diphosphate. DNA-dependent RNA polymerase (RNAP) catalyzes the transcription of DNA into RNA using the four ribonucleoside triphosphates as substrates. In Pyrococcus furiosus (strain ATCC 43587 / DSM 3638 / JCM 8422 / Vc1), this protein is DNA-directed RNA polymerase subunit Rpo6.